A 1180-amino-acid polypeptide reads, in one-letter code: RecBCD enzyme subunit RecB (1180 aa).

A DNA-binding and helicase activity, interacts with RecC region spans residues 1-852; that stretch reads MITTIPKSIN…QSGKNHISTK (852 aa). One can recognise a UvrD-like helicase ATP-binding domain in the interval 3 to 448; that stretch reads TTIPKSINVT…YFLDTNWRSS (446 aa). 24-31 is an ATP binding site; the sequence is ASAGTGKT. The UvrD-like helicase C-terminal domain occupies 478 to 745; the sequence is SSRINKTTKF…KIVSIHKSKG (268 aa). The interval 905–1180 is nuclease activity, interacts with RecD and RecA; sequence NYNFTSYSQL…EIIKKLEQIF (276 aa). Residues His-964, Asp-1075, and Asp-1088 each coordinate Mg(2+). Asp-1088 (for nuclease activity) is an active-site residue.

The protein belongs to the helicase family. UvrD subfamily. Heterotrimer of RecB, RecC and RecD. All subunits contribute to DNA-binding. Interacts with RecA. It depends on Mg(2+) as a cofactor.

It catalyses the reaction Exonucleolytic cleavage (in the presence of ATP) in either 5'- to 3'- or 3'- to 5'-direction to yield 5'-phosphooligonucleotides.. The enzyme catalyses Couples ATP hydrolysis with the unwinding of duplex DNA by translocating in the 3'-5' direction.. It carries out the reaction ATP + H2O = ADP + phosphate + H(+). In terms of biological role, a helicase/nuclease that prepares dsDNA breaks (DSB) for recombinational DNA repair. Binds to DSBs and unwinds DNA via a highly rapid and processive ATP-dependent bidirectional helicase activity. Unwinds dsDNA until it encounters a Chi (crossover hotspot instigator) sequence from the 3' direction. Cuts ssDNA a few nucleotides 3' to the Chi site. The properties and activities of the enzyme are changed at Chi. The Chi-altered holoenzyme produces a long 3'-ssDNA overhang and facilitates RecA-binding to the ssDNA for homologous DNA recombination and repair. Holoenzyme degrades any linearized DNA that is unable to undergo homologous recombination. In the holoenzyme this subunit contributes ATPase, 3'-5' helicase, exonuclease activity and loads RecA onto ssDNA. This Buchnera aphidicola subsp. Baizongia pistaciae (strain Bp) protein is RecBCD enzyme subunit RecB.